A 310-amino-acid polypeptide reads, in one-letter code: tRNA uridine(34) hydroxylase (310 aa).

The Rhodanese domain occupies 124–218 (SDPEVLLIDT…YFEEVPQEES (95 aa)). Residue Cys178 is the Cysteine persulfide intermediate of the active site.

This sequence belongs to the TrhO family.

The enzyme catalyses uridine(34) in tRNA + AH2 + O2 = 5-hydroxyuridine(34) in tRNA + A + H2O. Its function is as follows. Catalyzes oxygen-dependent 5-hydroxyuridine (ho5U) modification at position 34 in tRNAs. In Pseudomonas putida (strain GB-1), this protein is tRNA uridine(34) hydroxylase.